The following is a 364-amino-acid chain: Delta(7)-sterol 5(6)-desaturase (364 aa).

Helical transmembrane passes span 94-114, 142-162, and 181-201; these read FFSL…ITAS, LAVS…MLEL, and KLLI…YLAH. Positions 188 to 312 constitute a Fatty acid hydroxylase domain; the sequence is TFIFFTDCGI…FTTLWDRLGG (125 aa). The short motif at 201-205 is the Histidine box-1 element; the sequence is HRWLH. The Histidine box-2 motif lies at 214-218; it reads HKPHH. Residues 249-269 traverse the membrane as a helical segment; it reads ILPLHKISYLILFTFVNFWSV. A Histidine box-3 motif is present at residues 289–293; sequence HTVHH.

It belongs to the sterol desaturase family. Fe cation is required as a cofactor.

It localises to the endoplasmic reticulum membrane. It catalyses the reaction a Delta(7)-sterol + 2 Fe(II)-[cytochrome b5] + O2 + 2 H(+) = a Delta(5),Delta(7)-sterol + 2 Fe(III)-[cytochrome b5] + 2 H2O. Its pathway is steroid metabolism; ergosterol biosynthesis; ergosterol from zymosterol: step 3/5. Catalyzes the introduction of a C-5 double bond in the B ring of ergosterol. May contribute to the regulation of ergosterol biosynthesis. This chain is Delta(7)-sterol 5(6)-desaturase (ERG3), found in Candida glabrata (strain ATCC 2001 / BCRC 20586 / JCM 3761 / NBRC 0622 / NRRL Y-65 / CBS 138) (Yeast).